A 405-amino-acid polypeptide reads, in one-letter code: F-box/kelch-repeat protein At2g43445 (405 aa).

Residues 7–53 (NTNSIYIVSELLEEIFLGLPLKSILKFKTVSKQWRSILESNLFVERR) enclose the F-box domain. Kelch repeat units follow at residues 146–197 (RDKV…CVNG) and 356–400 (THHD…VVGY).

The protein is F-box/kelch-repeat protein At2g43445 of Arabidopsis thaliana (Mouse-ear cress).